The chain runs to 927 residues: Translation initiation factor IF-2 (927 aa).

The tract at residues 27–338 (LGLPVKSHAS…APKPVTERKF (312 aa)) is disordered. Positions 49–69 (SFSSSKTKAPTNSVQTNQGVK) are enriched in polar residues. 2 stretches are compositionally biased toward basic and acidic residues: residues 70–86 (TESK…DDKP) and 101–138 (FKAE…DRRH). Positions 146–159 (GNRNDNRQGQQNNR) are enriched in low complexity. Basic and acidic residues-rich tracts occupy residues 160–171 (NKNDGRYADHKQ), 202–226 (YSRH…EQEL), and 234–257 (AQEE…KEIV). The segment covering 300–316 (NWNNQNQVRNQRNSNWN) has biased composition (low complexity). The tr-type G domain occupies 428 to 597 (ERPPVVTIMG…LLVAEMEELK (170 aa)). A G1 region spans residues 437-444 (GHVDHGKT). 437–444 (GHVDHGKT) provides a ligand contact to GTP. The G2 stretch occupies residues 462–466 (GITQH). Residues 483-486 (DTPG) are G3. GTP is bound by residues 483–487 (DTPGH) and 537–540 (NKID). Positions 537–540 (NKID) are G4. The G5 stretch occupies residues 573–575 (SAK).

The protein belongs to the TRAFAC class translation factor GTPase superfamily. Classic translation factor GTPase family. IF-2 subfamily.

It localises to the cytoplasm. Its function is as follows. One of the essential components for the initiation of protein synthesis. Protects formylmethionyl-tRNA from spontaneous hydrolysis and promotes its binding to the 30S ribosomal subunits. Also involved in the hydrolysis of GTP during the formation of the 70S ribosomal complex. The protein is Translation initiation factor IF-2 of Streptococcus agalactiae serotype Ia (strain ATCC 27591 / A909 / CDC SS700).